We begin with the raw amino-acid sequence, 375 residues long: N-acetyldiaminopimelate deacetylase (375 aa).

The active site involves aspartate 69. The active-site Proton acceptor is glutamate 128.

This sequence belongs to the peptidase M20A family. N-acetyldiaminopimelate deacetylase subfamily.

The enzyme catalyses N-acetyl-(2S,6S)-2,6-diaminopimelate + H2O = (2S,6S)-2,6-diaminopimelate + acetate. It participates in amino-acid biosynthesis; L-lysine biosynthesis via DAP pathway; LL-2,6-diaminopimelate from (S)-tetrahydrodipicolinate (acetylase route): step 3/3. Catalyzes the conversion of N-acetyl-diaminopimelate to diaminopimelate and acetate. This is N-acetyldiaminopimelate deacetylase from Priestia megaterium (strain ATCC 12872 / QMB1551) (Bacillus megaterium).